The following is a 458-amino-acid chain: UDP-N-acetylmuramoylalanine--D-glutamate ligase (458 aa).

124-130 provides a ligand contact to ATP; the sequence is GSDGKTT.

It belongs to the MurCDEF family.

Its subcellular location is the cytoplasm. It catalyses the reaction UDP-N-acetyl-alpha-D-muramoyl-L-alanine + D-glutamate + ATP = UDP-N-acetyl-alpha-D-muramoyl-L-alanyl-D-glutamate + ADP + phosphate + H(+). It participates in cell wall biogenesis; peptidoglycan biosynthesis. Cell wall formation. Catalyzes the addition of glutamate to the nucleotide precursor UDP-N-acetylmuramoyl-L-alanine (UMA). This chain is UDP-N-acetylmuramoylalanine--D-glutamate ligase, found in Clostridium botulinum (strain ATCC 19397 / Type A).